We begin with the raw amino-acid sequence, 326 residues long: Phospho-N-acetylmuramoyl-pentapeptide-transferase (326 aa).

Transmembrane regions (helical) follow at residues 3-23, 51-71, 79-99, 115-135, 138-158, 169-189, 195-215, 221-243, and 306-326; these read ISIS…PAFI, TMGG…VALF, VGMI…DDFL, LALQ…GGDM, VFGY…FWLV, GIDG…GVIA, MDIL…FVFN, VFMG…MALH, and FFFW…LYLM.

This sequence belongs to the glycosyltransferase 4 family. MraY subfamily. The cofactor is Mg(2+).

It localises to the cell membrane. It carries out the reaction UDP-N-acetyl-alpha-D-muramoyl-L-alanyl-gamma-D-glutamyl-L-lysyl-D-alanyl-D-alanine + di-trans,octa-cis-undecaprenyl phosphate = Mur2Ac(oyl-L-Ala-gamma-D-Glu-L-Lys-D-Ala-D-Ala)-di-trans,octa-cis-undecaprenyl diphosphate + UMP. It functions in the pathway cell wall biogenesis; peptidoglycan biosynthesis. Catalyzes the initial step of the lipid cycle reactions in the biosynthesis of the cell wall peptidoglycan: transfers peptidoglycan precursor phospho-MurNAc-pentapeptide from UDP-MurNAc-pentapeptide onto the lipid carrier undecaprenyl phosphate, yielding undecaprenyl-pyrophosphoryl-MurNAc-pentapeptide, known as lipid I. This is Phospho-N-acetylmuramoyl-pentapeptide-transferase from Streptococcus pneumoniae (strain Taiwan19F-14).